The sequence spans 885 residues: DNA mismatch repair protein MutS (885 aa).

Position 626–633 (626–633 (GPNMGGKS)) interacts with ATP.

The protein belongs to the DNA mismatch repair MutS family.

Its function is as follows. This protein is involved in the repair of mismatches in DNA. It is possible that it carries out the mismatch recognition step. This protein has a weak ATPase activity. This Burkholderia orbicola (strain MC0-3) protein is DNA mismatch repair protein MutS.